Here is a 300-residue protein sequence, read N- to C-terminus: Actin-related protein 2/3 complex subunit 2-B (300 aa).

It belongs to the ARPC2 family. In terms of assembly, component of the Arp2/3 complex composed of actr2/arp2, actr3/arp3, arpc1 (arpc1a or arpc1b), arpc2, arpc3, arpc4 and arpc5.

It localises to the cytoplasm. It is found in the cytoskeleton. Its subcellular location is the cell projection. The protein resides in the nucleus. Functionally, actin-binding component of the Arp2/3 complex, a multiprotein complex that mediates actin polymerization upon stimulation by nucleation-promoting factor (NPF). The Arp2/3 complex mediates the formation of branched actin networks in the cytoplasm, providing the force for cell motility. In addition to its role in the cytoplasmic cytoskeleton, the Arp2/3 complex also promotes actin polymerization in the nucleus, thereby regulating gene transcription and repair of damaged DNA. The Arp2/3 complex promotes homologous recombination (HR) repair in response to DNA damage by promoting nuclear actin polymerization, leading to drive motility of double-strand breaks (DSBs). The chain is Actin-related protein 2/3 complex subunit 2-B (arpc2-b) from Xenopus laevis (African clawed frog).